The sequence spans 293 residues: DDRGK domain-containing protein 1 (293 aa).

Residues methionine 1–isoleucine 6 are Lumenal-facing. The chain crosses the membrane as a helical span at residues tyrosine 7–alanine 27. The Cytoplasmic portion of the chain corresponds to lysine 28 to alanine 293. Disordered stretches follow at residues valine 30–glutamate 151 and threonine 273–alanine 293. Basic and acidic residues-rich tracts occupy residues lysine 90 to glutamate 126 and glutamate 133 to glutamate 151.

It belongs to the DDRGK1 family.

The protein resides in the endoplasmic reticulum membrane. Substrate adapter for ufmylation, the covalent attachment of the ubiquitin-like modifier UFM1 to substrate proteins. The protein is DDRGK domain-containing protein 1 of Monosiga brevicollis (Choanoflagellate).